The chain runs to 230 residues: 5'-methylthioadenosine/S-adenosylhomocysteine nucleosidase (230 aa).

Glu-12 serves as the catalytic Proton acceptor. Residues Gly-78, Ile-153, and 174-175 (ME) contribute to the substrate site. Asp-198 functions as the Proton donor in the catalytic mechanism.

It belongs to the PNP/UDP phosphorylase family. MtnN subfamily.

It catalyses the reaction S-adenosyl-L-homocysteine + H2O = S-(5-deoxy-D-ribos-5-yl)-L-homocysteine + adenine. The catalysed reaction is S-methyl-5'-thioadenosine + H2O = 5-(methylsulfanyl)-D-ribose + adenine. The enzyme catalyses 5'-deoxyadenosine + H2O = 5-deoxy-D-ribose + adenine. It participates in amino-acid biosynthesis; L-methionine biosynthesis via salvage pathway; S-methyl-5-thio-alpha-D-ribose 1-phosphate from S-methyl-5'-thioadenosine (hydrolase route): step 1/2. Functionally, catalyzes the irreversible cleavage of the glycosidic bond in both 5'-methylthioadenosine (MTA) and S-adenosylhomocysteine (SAH/AdoHcy) to adenine and the corresponding thioribose, 5'-methylthioribose and S-ribosylhomocysteine, respectively. Also cleaves 5'-deoxyadenosine, a toxic by-product of radical S-adenosylmethionine (SAM) enzymes, into 5-deoxyribose and adenine. The sequence is that of 5'-methylthioadenosine/S-adenosylhomocysteine nucleosidase from Shewanella pealeana (strain ATCC 700345 / ANG-SQ1).